The primary structure comprises 79 residues: Small ribosomal subunit protein bS18B (79 aa).

A compositionally biased stretch (basic and acidic residues) spans 1–11 (MPRPRKADRTP). The interval 1-24 (MPRPRKADRTPARQRPNPLDRDGV) is disordered.

This sequence belongs to the bacterial ribosomal protein bS18 family. Part of the 30S ribosomal subunit. Forms a tight heterodimer with protein bS6.

Its function is as follows. Binds as a heterodimer with protein bS6 to the central domain of the 16S rRNA, where it helps stabilize the platform of the 30S subunit. The chain is Small ribosomal subunit protein bS18B from Streptomyces coelicolor (strain ATCC BAA-471 / A3(2) / M145).